The primary structure comprises 137 residues: Basic phospholipase A2 homolog 2 (137 aa).

The N-terminal stretch at 1–16 is a signal peptide; that stretch reads MRTLWIMAVLLVGVEG. Disulfide bonds link cysteine 42-cysteine 131, cysteine 44-cysteine 60, cysteine 59-cysteine 111, cysteine 65-cysteine 137, cysteine 66-cysteine 104, cysteine 73-cysteine 97, and cysteine 91-cysteine 102. Residues 121–133 form an important for membrane-damaging activities in eukaryotes and bacteria; heparin-binding region; that stretch reads KKYRYYLKPLCKK.

Belongs to the phospholipase A2 family. Group II subfamily. K49 sub-subfamily. Homodimer; non-covalently linked. Binds to heparin. In terms of processing, it binds long-chain fatty acids covalently by a rapid, spontaneous, and autocatalytic process. When acylated, it binds to the surface of liposomes and isolated muscle membranes, with the fatty acid moiety inserted into the lipid bilayer and possibly acting as an anchor. Expressed by the venom gland.

It localises to the secreted. With respect to regulation, heparin inhibits the myotoxic activity. Suramin inhibits the myotoxic activity. High level of membrane cholesterol content reduces cytolytic activity, whereas low level of membrane cholesterol content increases cytolytic activity. In terms of biological role, snake venom phospholipase A2 homolog that lacks enzymatic activity. Is myotoxic and induces a dose-dependent edema in the mouse foot pad. Also exhibits strong anticoagulant effects by binding to factor Xa (F10) and inhibiting the prothrombinase activity (IC(50) is 3 nM). In addition, it shows cytotoxic activity to a variety of cell types and bactericidal activity to a variety of Gram-negative and Gram-positive bacteria. Also induces a very rapid release of large amounts of potassium ions and ATP from muscle cells, which accounts for the pain reaction characteristic of viperid envenomations. The released ATP amplifies the effect of the myotoxins, acting as a 'danger signal', which spreads and causes further damage by acting on purinergic receptors. A model of myotoxic mechanism has been proposed: an apo Lys49-PLA2 is activated by the entrance of a hydrophobic molecule (e.g. fatty acid) at the hydrophobic channel of the protein leading to a reorientation of a monomer. This reorientation causes a transition between 'inactive' to 'active' states, causing alignment of C-terminal and membrane-docking sites (MDoS) side-by-side and putting the membrane-disruption sites (MDiS) in the same plane, exposed to solvent and in a symmetric position for both monomers. The MDoS region stabilizes the toxin on membrane by the interaction of charged residues with phospholipid head groups. Subsequently, the MDiS region destabilizes the membrane with penetration of hydrophobic residues. This insertion causes a disorganization of the membrane, allowing an uncontrolled influx of ions (i.e. calcium and sodium), and eventually triggering irreversible intracellular alterations and cell death. The polypeptide is Basic phospholipase A2 homolog 2 (Bothrops asper (Terciopelo)).